A 272-amino-acid polypeptide reads, in one-letter code: Exosome complex component Rrp42 (272 aa).

This sequence belongs to the RNase PH family. Rrp42 subfamily. In terms of assembly, component of the archaeal exosome complex. Forms a hexameric ring-like arrangement composed of 3 Rrp41-Rrp42 heterodimers. The hexameric ring associates with a trimer of Rrp4 and/or Csl4 subunits.

The protein resides in the cytoplasm. Functionally, non-catalytic component of the exosome, which is a complex involved in RNA degradation. Contributes to the structuring of the Rrp41 active site. The chain is Exosome complex component Rrp42 from Thermococcus kodakarensis (strain ATCC BAA-918 / JCM 12380 / KOD1) (Pyrococcus kodakaraensis (strain KOD1)).